The primary structure comprises 84 residues: Small ribosomal subunit protein uS17 (84 aa).

It belongs to the universal ribosomal protein uS17 family. In terms of assembly, part of the 30S ribosomal subunit.

Its function is as follows. One of the primary rRNA binding proteins, it binds specifically to the 5'-end of 16S ribosomal RNA. The polypeptide is Small ribosomal subunit protein uS17 (Blochmanniella pennsylvanica (strain BPEN)).